The primary structure comprises 762 residues: Cellulose synthase-like protein H2 (762 aa).

Positions 1–15 (MAVVAAAAATGSTTR) are enriched in low complexity. Residues 1 to 39 (MAVVAAAAATGSTTRSGGGGGEGTRSGRKKPPPPPLQER) form a disordered region. Helical transmembrane passes span 47-67 (AWAW…LLAL) and 81-101 (GVWR…ALNV). Catalysis depends on residues Asp-180 and Asp-470. 6 helical membrane passes run 541 to 561 (LAYL…CYGL), 582 to 602 (FSVP…EYMA), 619 to 639 (IISV…SLGL), 673 to 693 (LPVF…VTVG), 708 to 728 (APGI…FPFV), and 739 to 759 (GIPW…VTFC).

It belongs to the glycosyltransferase 2 family. Plant cellulose synthase-like H subfamily.

Its subcellular location is the golgi apparatus membrane. In terms of biological role, thought to be a Golgi-localized beta-glycan synthase that polymerize the backbones of noncellulosic polysaccharides (hemicelluloses) of plant cell wall. In Oryza sativa subsp. indica (Rice), this protein is Cellulose synthase-like protein H2 (CSLH2).